A 118-amino-acid chain; its full sequence is MARIKRGVIAHARHKKILKQAKGYYGARSRIYRVAHQAVIKAGQYAYRDRRQRKRQFRQLWISRINAAVRQSKMSYSNFIFGLKKASINIDRKILSDIAIFDLLSFNALVKKAKEALL.

Belongs to the bacterial ribosomal protein bL20 family.

Functionally, binds directly to 23S ribosomal RNA and is necessary for the in vitro assembly process of the 50S ribosomal subunit. It is not involved in the protein synthesizing functions of that subunit. The polypeptide is Large ribosomal subunit protein bL20 (rplT) (Buchnera aphidicola subsp. Acyrthosiphon pisum (strain APS) (Acyrthosiphon pisum symbiotic bacterium)).